An 80-amino-acid polypeptide reads, in one-letter code: Exodeoxyribonuclease 7 small subunit (80 aa).

The protein belongs to the XseB family. In terms of assembly, heterooligomer composed of large and small subunits.

The protein localises to the cytoplasm. It carries out the reaction Exonucleolytic cleavage in either 5'- to 3'- or 3'- to 5'-direction to yield nucleoside 5'-phosphates.. Its function is as follows. Bidirectionally degrades single-stranded DNA into large acid-insoluble oligonucleotides, which are then degraded further into small acid-soluble oligonucleotides. The sequence is that of Exodeoxyribonuclease 7 small subunit from Oleidesulfovibrio alaskensis (strain ATCC BAA-1058 / DSM 17464 / G20) (Desulfovibrio alaskensis).